Here is a 194-residue protein sequence, read N- to C-terminus: dCTP deaminase (194 aa).

Residues 110–115 (RSSLAR), Asp128, 136–138 (VLE), Tyr171, Lys178, and Gln182 contribute to the dCTP site. Glu138 serves as the catalytic Proton donor/acceptor.

This sequence belongs to the dCTP deaminase family. Homotrimer.

It carries out the reaction dCTP + H2O + H(+) = dUTP + NH4(+). It functions in the pathway pyrimidine metabolism; dUMP biosynthesis; dUMP from dCTP (dUTP route): step 1/2. In terms of biological role, catalyzes the deamination of dCTP to dUTP. The sequence is that of dCTP deaminase from Pasteurella multocida (strain Pm70).